The primary structure comprises 458 residues: ATP synthase subunit beta (458 aa).

Gly-147–Thr-154 provides a ligand contact to ATP.

The protein belongs to the ATPase alpha/beta chains family. In terms of assembly, F-type ATPases have 2 components, CF(1) - the catalytic core - and CF(0) - the membrane proton channel. CF(1) has five subunits: alpha(3), beta(3), gamma(1), delta(1), epsilon(1). CF(0) has three main subunits: a(1), b(2) and c(9-12). The alpha and beta chains form an alternating ring which encloses part of the gamma chain. CF(1) is attached to CF(0) by a central stalk formed by the gamma and epsilon chains, while a peripheral stalk is formed by the delta and b chains.

The protein localises to the cell inner membrane. It catalyses the reaction ATP + H2O + 4 H(+)(in) = ADP + phosphate + 5 H(+)(out). Produces ATP from ADP in the presence of a proton gradient across the membrane. The catalytic sites are hosted primarily by the beta subunits. In Chromohalobacter salexigens (strain ATCC BAA-138 / DSM 3043 / CIP 106854 / NCIMB 13768 / 1H11), this protein is ATP synthase subunit beta.